A 120-amino-acid chain; its full sequence is UPF0231 protein YacL (120 aa).

This sequence belongs to the UPF0231 family.

This Escherichia coli (strain SMS-3-5 / SECEC) protein is UPF0231 protein YacL.